Reading from the N-terminus, the 167-residue chain is Signal peptidase complex subunit 3A (167 aa).

At 1 to 11 the chain is on the cytoplasmic side; sequence MHTFGYRANAL. Residues 12-32 traverse the membrane as a helical; Signal-anchor for type II membrane protein segment; it reads LTFAVTALAFICAIASFSDKF. The Lumenal portion of the chain corresponds to 33–167; sequence SNQNPSAEIQ…PGYSLPDAYR (135 aa). An N-linked (GlcNAc...) asparagine glycan is attached at Asn136.

The protein belongs to the SPCS3 family. In terms of assembly, component of the signal peptidase complex (SPC) composed of a catalytic subunit SEC11 and three accessory subunits SPCS1, SPCS2 and SPCS3. The complex induces a local thinning of the ER membrane which is used to measure the length of the signal peptide (SP) h-region of protein substrates. This ensures the selectivity of the complex towards h-regions shorter than 18-20 amino acids.

The protein resides in the endoplasmic reticulum membrane. In terms of biological role, essential component of the signal peptidase complex (SPC) which catalyzes the cleavage of N-terminal signal sequences from nascent proteins as they are translocated into the lumen of the endoplasmic reticulum. Essential for the SPC catalytic activity, possibly by stabilizing and positioning the active center of the complex close to the lumenal surface. The chain is Signal peptidase complex subunit 3A from Arabidopsis thaliana (Mouse-ear cress).